The following is a 153-amino-acid chain: Prefoldin subunit alpha (153 aa).

Residues Lys126–Glu153 form a disordered region. Over residues His143–Glu153 the composition is skewed to basic and acidic residues.

It belongs to the prefoldin alpha subunit family. Heterohexamer of two alpha and four beta subunits.

It localises to the cytoplasm. Molecular chaperone capable of stabilizing a range of proteins. Seems to fulfill an ATP-independent, HSP70-like function in archaeal de novo protein folding. The chain is Prefoldin subunit alpha from Methanoregula boonei (strain DSM 21154 / JCM 14090 / 6A8).